The chain runs to 252 residues: tRNA pseudouridine synthase A (252 aa).

The active-site Nucleophile is the D54. Y113 contacts substrate.

It belongs to the tRNA pseudouridine synthase TruA family. As to quaternary structure, homodimer.

The enzyme catalyses uridine(38/39/40) in tRNA = pseudouridine(38/39/40) in tRNA. Its function is as follows. Formation of pseudouridine at positions 38, 39 and 40 in the anticodon stem and loop of transfer RNAs. This chain is tRNA pseudouridine synthase A, found in Bacteroides fragilis (strain ATCC 25285 / DSM 2151 / CCUG 4856 / JCM 11019 / LMG 10263 / NCTC 9343 / Onslow / VPI 2553 / EN-2).